Reading from the N-terminus, the 336-residue chain is Glyceraldehyde-3-phosphate dehydrogenase (336 aa).

NAD(+)-binding positions include 12-13 (RI), Asp34, and Ser120. D-glyceraldehyde 3-phosphate-binding positions include 150–152 (SCT), Thr181, Arg198, 211–212 (TG), and Arg234. Residue Cys151 is the Nucleophile of the active site. Asn316 provides a ligand contact to NAD(+).

Belongs to the glyceraldehyde-3-phosphate dehydrogenase family. As to quaternary structure, homotetramer.

The protein resides in the cytoplasm. It catalyses the reaction D-glyceraldehyde 3-phosphate + phosphate + NAD(+) = (2R)-3-phospho-glyceroyl phosphate + NADH + H(+). It participates in carbohydrate degradation; glycolysis; pyruvate from D-glyceraldehyde 3-phosphate: step 1/5. In terms of biological role, catalyzes the oxidative phosphorylation of glyceraldehyde 3-phosphate (G3P) to 1,3-bisphosphoglycerate (BPG) using the cofactor NAD. The first reaction step involves the formation of a hemiacetal intermediate between G3P and a cysteine residue, and this hemiacetal intermediate is then oxidized to a thioester, with concomitant reduction of NAD to NADH. The reduced NADH is then exchanged with the second NAD, and the thioester is attacked by a nucleophilic inorganic phosphate to produce BPG. This Staphylococcus aureus protein is Glyceraldehyde-3-phosphate dehydrogenase (gapA).